An 89-amino-acid chain; its full sequence is MAVTVAQKAQIVQDYQRAAADTGSPEVQVALLTARINDLTGHFKANIKDHHSRRGLLKMVSRRRKLLDYLKRTNLESYKTLIERLGLRK.

Belongs to the universal ribosomal protein uS15 family. As to quaternary structure, part of the 30S ribosomal subunit. Forms a bridge to the 50S subunit in the 70S ribosome, contacting the 23S rRNA.

In terms of biological role, one of the primary rRNA binding proteins, it binds directly to 16S rRNA where it helps nucleate assembly of the platform of the 30S subunit by binding and bridging several RNA helices of the 16S rRNA. Forms an intersubunit bridge (bridge B4) with the 23S rRNA of the 50S subunit in the ribosome. The chain is Small ribosomal subunit protein uS15 from Thiobacillus denitrificans (strain ATCC 25259 / T1).